We begin with the raw amino-acid sequence, 562 residues long: Putative transport protein PC1_1686 (562 aa).

6 helical membrane-spanning segments follow: residues 8-28 (LLNG…LCLG), 32-52 (LGPV…LLGQ), 66-86 (FMLF…SIFF), 93-113 (FMLA…LGKF), 116-136 (WGIG…PVLV), and 158-178 (HLSL…IFGA). RCK C-terminal domains follow at residues 202-288 (LDAD…NFRD) and 292-373 (VFDR…RIGF). A run of 5 helical transmembrane segments spans residues 383 to 403 (LLAF…TIQF), 406 to 426 (FTFG…LGFL), 447 to 467 (FGLM…INSS), 478 to 498 (SGLI…AYVL), and 537 to 557 (GTYA…VIIW).

The protein belongs to the AAE transporter (TC 2.A.81) family. YbjL subfamily.

It is found in the cell membrane. This Pectobacterium carotovorum subsp. carotovorum (strain PC1) protein is Putative transport protein PC1_1686.